We begin with the raw amino-acid sequence, 83 residues long: ATP synthase subunit c (83 aa).

The next 2 helical transmembrane spans lie at 10-30 (IAVA…FGLL) and 52-72 (MFIV…IALY).

This sequence belongs to the ATPase C chain family. F-type ATPases have 2 components, F(1) - the catalytic core - and F(0) - the membrane proton channel. F(1) has five subunits: alpha(3), beta(3), gamma(1), delta(1), epsilon(1). F(0) has three main subunits: a(1), b(2) and c(10-14). The alpha and beta chains form an alternating ring which encloses part of the gamma chain. F(1) is attached to F(0) by a central stalk formed by the gamma and epsilon chains, while a peripheral stalk is formed by the delta and b chains.

It localises to the cell inner membrane. Its function is as follows. F(1)F(0) ATP synthase produces ATP from ADP in the presence of a proton or sodium gradient. F-type ATPases consist of two structural domains, F(1) containing the extramembraneous catalytic core and F(0) containing the membrane proton channel, linked together by a central stalk and a peripheral stalk. During catalysis, ATP synthesis in the catalytic domain of F(1) is coupled via a rotary mechanism of the central stalk subunits to proton translocation. Functionally, key component of the F(0) channel; it plays a direct role in translocation across the membrane. A homomeric c-ring of between 10-14 subunits forms the central stalk rotor element with the F(1) delta and epsilon subunits. The sequence is that of ATP synthase subunit c from Shewanella amazonensis (strain ATCC BAA-1098 / SB2B).